Reading from the N-terminus, the 147-residue chain is Receptor activity-modifying protein 3 (147 aa).

The first 22 residues, 1-22, serve as a signal peptide directing secretion; it reads MATPAQRLHLLPLLLLLCGECA. At 23-112 the chain is on the extracellular side; the sequence is QVCGCNETGM…CTVDRTHWED (90 aa). 4 N-linked (GlcNAc...) asparagine glycosylation sites follow: asparagine 28, asparagine 57, asparagine 70, and asparagine 102. 2 disulfide bridges follow: cysteine 39–cysteine 71 and cysteine 56–cysteine 103. A helical membrane pass occupies residues 113-137; the sequence is PPDEVLIPLIAVPVLLTVAMAGLVV. Residues 138 to 147 lie on the Cytoplasmic side of the membrane; that stretch reads WRSKRTDRLL.

Belongs to the RAMP family. Heterodimer of CALCRL and RAMP3; interaction induces allosteric modulation of CALCRL function and ligand specificity for adrenomedullin/ADM and intermedin/ADM2. Heterodimer of CALCR and RAMP3; interaction form the receptor complex AMYR3 for amylin/IAPP. Interacts with GPER1.

The protein resides in the cell membrane. It is found in the membrane. Its function is as follows. Accessory protein that interacts with and modulates the function of G-protein coupled receptors including calcitonin gene-related peptide type 1 receptor (CALCRL), calcitonin receptor (CALCR) and G-protein coupled estrogen receptor 1 (GPER1). Required for the transport of CALCRL and GPER1 receptors to the plasma membrane. Plays a role in cardioprotection by reducing cardiac hypertrophy and perivascular fibrosis in a GPER1-dependent manner. Together with CALCRL, form a receptor complex for adrenomedullin/ADM and intermedin/ADM2. Together with CALCR, act as a receptor complex for amylin/IAPP. In Rattus norvegicus (Rat), this protein is Receptor activity-modifying protein 3.